We begin with the raw amino-acid sequence, 519 residues long: ATP synthase subunit alpha (519 aa).

Residue 174–181 (GDRQTGKT) coordinates ATP.

The protein belongs to the ATPase alpha/beta chains family. In terms of assembly, F-type ATPases have 2 components, CF(1) - the catalytic core - and CF(0) - the membrane proton channel. CF(1) has five subunits: alpha(3), beta(3), gamma(1), delta(1), epsilon(1). CF(0) has three main subunits: a(1), b(2) and c(9-12). The alpha and beta chains form an alternating ring which encloses part of the gamma chain. CF(1) is attached to CF(0) by a central stalk formed by the gamma and epsilon chains, while a peripheral stalk is formed by the delta and b chains.

It is found in the cell inner membrane. It carries out the reaction ATP + H2O + 4 H(+)(in) = ADP + phosphate + 5 H(+)(out). In terms of biological role, produces ATP from ADP in the presence of a proton gradient across the membrane. The alpha chain is a regulatory subunit. This is ATP synthase subunit alpha from Acidovorax ebreus (strain TPSY) (Diaphorobacter sp. (strain TPSY)).